Here is a 312-residue protein sequence, read N- to C-terminus: Urease accessory protein 7 (312 aa).

The tract at residues 28–86 (QEATGTDSHHAHHHHTPSGASSAISHTHDNMPHDHGQFHDHGPGLWTPEEHGHTHEHLE) is disordered. Residues 36–87 (HHAHHHHTPSGASSAISHTHDNMPHDHGQFHDHGPGLWTPEEHGHTHEHLEH) are histine rich nickel-binding domain. Residues 53-86 (HTHDNMPHDHGQFHDHGPGLWTPEEHGHTHEHLE) are compositionally biased toward basic and acidic residues. The short motif at 115–122 (GPVGSGKT) is the GTP binding P-loop element. Residues 147-154 (TREDQEFL) carry the Switch domain 1 motif. The short motif at 171 to 172 (GG) is the switch domain 2 element.

The protein belongs to the SIMIBI class G3E GTPase family. UreG subfamily. In terms of assembly, URE4, URE6 and URE7 may form a complex that acts as a GTP-hydrolysis-dependent molecular chaperone, activating the urease apoprotein URE1.

In terms of biological role, urease accessory protein that binds 2 nickel atoms likely via its conserved histidine-rich domain and supplies nickel for the functional urease URE1. Has probably a dual function as a nickel chaperone and GTPase. Plays a role in host brain invasion. The polypeptide is Urease accessory protein 7 (Cryptococcus neoformans var. grubii serotype A (strain H99 / ATCC 208821 / CBS 10515 / FGSC 9487) (Filobasidiella neoformans var. grubii)).